Consider the following 1836-residue polypeptide: MSSLADQLKVIKEKTASVVLDRKARSKIHSRSLIFDPKVASTQDYDYLYQLGLEGLDELSEIDSRFSKFRHTLFSETSVSMDRNVQTKDVISQLDKNIDAFLTLAGPFYSLAPTVKAVEWLVRRFHINMHNGEMLLLTSLPHYNQSVFVKILNVIPKNSFPKIFDWVVGYKDLLKNPPSSSILKAFHNDFEFFKLYAMFLVEQLKNGTVYQEQLSFFLSTTVQLLASLSKSLDTLNENHLPVVLEVVGFLLLPSKYETLRNIDVDTRLTAYSIIAVLASIIPISTELIRSFTESILQDPRSLEPNSVRQTLIVLSQLWRFYQGDFSDREAIVKCFANLAPSKLIKVEHLVKDLVADNYKFQKFLTFYFFATFPNPESYKIFQLVDLGKSELYFSEIAKQIVENSTATDKCRSVVIHICEELLKSNSELFIKALATQEMNIDALEMKLMTTLGSNSSVRDSDDVEFDAGEEDNNDEETEEVAVQFATAANLDSIKSSSKSFFTSSSDSEFSKLTLDLISLLRNVTVKVQKSLLLKFTTSVFSSIETGISFLIRIAFTPSIPLSIRLTAIRCTKWKLKEASTSSSSPLDLYLLIPIFLLGVYDETRVVRAGFVQLLRFIKETTTSIHANKKKVKSVLFMEDVIYDTTEASKRAIISPNDALFFTELLLKEDVLEDVIIDRSRLVPKFGQLILKTFVINQWSLNFFPVVFKWRAWNIVALENKNGTEDRFFFTDSDLSEYFTKRSNWIQQANDAKIAFFEEVEGAIVGLVGGNSTNEAKTATEVDWIIQSLNSQFSNLQIAVNSRLLEIFNNFSTVENRIKIVNKLIDLLNNDEPIESDPMDTLQTLKLDQDLFISVLGNVQIGGQIPEQGPAKRRRRSSSSTKQAMAREDINNMASTHLKKLTIILDLLETNLRNGTETIASPNLLQALFKILTDLDYLGNDGNLPVLYAQEALASCMILSIVKMKNSDETFKFDSNSIRADLIVNSIRSSQSPQVQNRLLLVIAELASLAPEIVLHSVMPIFTFMGAHTVRQDDEFSSSALQQTIAKVIPAVAANGSSSISNEIEFLLTSFVTAFQHIPRHRRVKLFTYLIRTLGSDLSLHVLLFLMGQQYCSSLNKNKMADAQVILEFTSSFLKSFSAIEQLEGISKFAELWDMIPIAELEANSEEYNKLSTRSIFGVSILSLTNSGLSTLRIEMLKYISSVVATENSNFDANTLKTKVAMVLLDSSINDDDEEKKSILGSFRNVAAFLLSSLDTFTNVSRNSEIALSLYDLLANFLNLLPIHYFVDSIFESLDVGKFSDTLSIKVAKNLVILAGAKFESELSSINIDEKIEESVLEKLLPVLLHGIKKNVDIELEQAYLDTFAIIVNKFGASTKTLATPTNSRLLLESLQAITSENCLLSESPETIISSINAITSIVNVLGVKTIGIFPKIVPPSLKIWETTTHSEDEESAKLIQSSIIVLLSCLIKKIPAFMTSSLDSIFITILSSDYVDNSIRTSVLGLVVEHMDSSQVLKSLCNIWCNKKFYENDNTGNIGLYLNTMQSTIDKIDKKSAATQSTVFIKWLIQAFEFRHYSEEADNKFDNNTIHRLESSFHSCGISYVMKLNDKKFRPLFATLVRWAVEGEGSNFSENTEVSRLVAFFKFFNKMQEQLKSIITSYFSYLLDPVASVLTRFSSGQLKDINLRRILLNSLTSSFKYDQDDYWSQQGRFDSICNPLLEQLTNIEEGIGKYLIKSITAFINNVASEEYNETLVHGLIKYISNEKEDNSSSTKIWTIRALKSIFQKMGEQWLTYLPTLIPYIAELLEDDDQAVEMEVRSGLVRVIENVLGEPLDRYLD.

Residues 245-283 (EVVGFLLLPSKYETLRNIDVDTRLTAYSIIAVLASIIPI) form an HEAT 1 repeat. The interval 453-473 (SNSSVRDSDDVEFDAGEEDNN) is disordered. Residues 461 to 473 (DDVEFDAGEEDNN) are compositionally biased toward acidic residues. 2 HEAT repeats span residues 585–623 (PLDL…TTTS) and 813–850 (VENR…DQDL). A disordered region spans residues 863-883 (QIPEQGPAKRRRRSSSSTKQA). The next 2 membrane-spanning stretches (helical) occupy residues 998–1018 (LLLV…HSVM) and 1085–1105 (LFTY…LLFL). HEAT repeat units lie at residues 1333–1372 (ESVL…KFGA), 1749–1787 (ETLV…KMGE), and 1790–1828 (LTYL…NVLG).

This sequence belongs to the HEATR1/UTP10 family. In terms of assembly, component of the ribosomal small subunit (SSU) processome.

The protein resides in the nucleus. It is found in the nucleolus. The protein localises to the membrane. Functionally, involved in nucleolar processing of pre-18S ribosomal RNA. Involved in ribosome biosynthesis. This chain is U3 small nucleolar RNA-associated protein 10, found in Scheffersomyces stipitis (strain ATCC 58785 / CBS 6054 / NBRC 10063 / NRRL Y-11545) (Yeast).